The sequence spans 121 residues: Fluoride-specific ion channel FluC 3 (121 aa).

The next 4 membrane-spanning stretches (helical) occupy residues 3-23, 40-60, 69-89, and 101-121; these read VFLPILVCLCGGVGASCRYLL, FTINLIAGFLAGLVAALALGG, VLATGFLGGFSTFSTAINEMV, and AAYLVLSLGVPVVAAACGFLV. Glycine 76 and serine 79 together coordinate Na(+).

This sequence belongs to the fluoride channel Fluc/FEX (TC 1.A.43) family.

The protein resides in the cell membrane. The enzyme catalyses fluoride(in) = fluoride(out). Its activity is regulated as follows. Na(+) is not transported, but it plays an essential structural role and its presence is essential for fluoride channel function. Its function is as follows. Fluoride-specific ion channel. Important for reducing fluoride concentration in the cell, thus reducing its toxicity. This chain is Fluoride-specific ion channel FluC 3, found in Bifidobacterium longum (strain NCC 2705).